The primary structure comprises 634 residues: Knob-associated histidine-rich protein (634 aa).

Positions 1 to 34 are cleaved as a signal peptide; it reads MKSFKNKNTLRRKKAFPVFTKILLVSFLVWVLKC. N-linked (GlcNAc...) asparagine glycosylation occurs at Asn-42. The span at 57–87 shows a compositional bias: basic residues; it reads AQKQHEHHHHHHHQHQHQHQAPHQAHHHHHH. 2 disordered regions span residues 57 to 143 and 347 to 634; these read AQKQ…QVFR and SSVN…GCCG. Positions 95–104 are enriched in low complexity; it reads PQVHQQVHGQ. The segment covering 108–117 has biased composition (basic residues); it reads HHHHHHHHHQ. 2 stretches are compositionally biased toward basic and acidic residues: residues 354–375 and 396–405; these read KHGDEKHHSSKKHEGNDGEGEK and KDNEDAESVK. Residues 406–422 are compositionally biased toward basic residues; it reads SKKHKSHDCEKKKSKKH. 2 stretches are compositionally biased toward basic and acidic residues: residues 423–444 and 453–493; these read KDNEDAESVKSKKSVKEKGEKH and KTNE…KKVD. Positions 494 to 505 are enriched in polar residues; it reads STSADNKSTNAA. Residues 509–520 are compositionally biased toward basic and acidic residues; it reads AKDKTQGGKTDK. Tandem repeats lie at residues 540 to 549, 550 to 559, 560 to 569, and 570 to 579. A 4 X 10 AA tandem repeats of [TS]-[KE]-[GE]-A-T-K-[EG]-A-S-T region spans residues 540–580; that stretch reads TKGATKEASTSKEATKEASTSKGATKEASTTEGATKGASTT. Positions 567–591 are enriched in low complexity; it reads ASTTEGATKGASTTAGSTTGATTGA. Over residues 605–620 the composition is skewed to polar residues; that stretch reads AANNGEQVMSRGQAQL. Basic residues predominate over residues 625-634; the sequence is KKKKKRGCCG.

It is found in the secreted. KAHRP might mimick human histidine-rich glycoproteins to anchor host thrombospondin or a parasite analog in a binding complex with the endothelial cell receptor. The protein is Knob-associated histidine-rich protein of Plasmodium falciparum (isolate FCR-3 / Gambia).